Here is a 168-residue protein sequence, read N- to C-terminus: ATP synthase subunit b, chloroplastic (168 aa).

The chain crosses the membrane as a helical span at residues 20–37; sequence LNLAVVLPIVFTLGRDTL.

This sequence belongs to the ATPase B chain family. In terms of assembly, F-type ATPases have 2 components, F(1) - the catalytic core - and F(0) - the membrane proton channel. F(1) has five subunits: alpha(3), beta(3), gamma(1), delta(1), epsilon(1). F(0) has four main subunits: a(1), b(1), b'(1) and c(10-14). The alpha and beta chains form an alternating ring which encloses part of the gamma chain. F(1) is attached to F(0) by a central stalk formed by the gamma and epsilon chains, while a peripheral stalk is formed by the delta, b and b' chains.

The protein resides in the plastid. Its subcellular location is the chloroplast thylakoid membrane. Functionally, f(1)F(0) ATP synthase produces ATP from ADP in the presence of a proton or sodium gradient. F-type ATPases consist of two structural domains, F(1) containing the extramembraneous catalytic core and F(0) containing the membrane proton channel, linked together by a central stalk and a peripheral stalk. During catalysis, ATP synthesis in the catalytic domain of F(1) is coupled via a rotary mechanism of the central stalk subunits to proton translocation. Component of the F(0) channel, it forms part of the peripheral stalk, linking F(1) to F(0). The chain is ATP synthase subunit b, chloroplastic from Ostreococcus tauri.